Consider the following 412-residue polypeptide: Alpha-1-antitrypsin 1-3 (412 aa).

The signal sequence occupies residues 1-24; it reads MTPSISWGLLLLAGLCCLVPSFLA. Asn64, Asn101, and Asn265 each carry an N-linked (GlcNAc...) asparagine glycan. The segment at 368 to 387 is RCL; that stretch reads AVTVLLAVPYSMPPILRFDH.

It belongs to the serpin family.

The protein resides in the secreted. Functionally, inhibitor of serine proteases. Can inhibit trypsin and chymotrypsin; relatively ineffective against elastase. This chain is Alpha-1-antitrypsin 1-3 (Serpina1c), found in Mus musculus (Mouse).